The sequence spans 80 residues: Small ribosomal subunit protein bS16 (80 aa).

It belongs to the bacterial ribosomal protein bS16 family.

The protein is Small ribosomal subunit protein bS16 of Wigglesworthia glossinidia brevipalpis.